A 549-amino-acid chain; its full sequence is Limonene dehydrogenase subunit B (549 aa).

The protein belongs to the carotenoid/retinoid oxidoreductase family. In terms of assembly, heterodimer composed of CtmA and CtmB. It depends on FAD as a cofactor.

The protein localises to the cytoplasm. It catalyses the reaction (4S)-limonene + A + H2O = (4S)-perillyl alcohol + AH2. It carries out the reaction (4R)-limonene + A + H2O = (4R)-perillyl alcohol + AH2. The protein operates within terpene metabolism; monoterpene degradation. With respect to regulation, the presence of molecular oxygen causes a 40% reduction in specific activity. Its function is as follows. Involved in the degradation of the cyclic monoterpene limonene. Catalyzes the oxidation of limonene at the primary methyl group, forming perillyl alcohol. Hydroxylates the R- and S-enantiomers to their respective enantiomeric form of perillyl alcohol at a similar rate. Native CtmAB oxidizes a wide range of monocyclic monoterpenes containing the allylic methyl group motif (1-methyl-cyclohex-1-ene). Can also catalyze the reverse reaction, the reduction of perillyl alcohol to limonene, but with lower efficiency. Cannot use molecular oxygen as an electron acceptor. The natural electron acceptor is likely a heterodimeric electron transfer flavoprotein (ETF). This is Limonene dehydrogenase subunit B from Castellaniella defragrans (strain DSM 12143 / CCUG 39792 / 65Phen) (Alcaligenes defragrans).